The primary structure comprises 132 residues: uncharacterized protein (132 aa).

A helical transmembrane segment spans residues 105–125 (VHGYVVFWLSILCILIIIFVY).

Its subcellular location is the membrane. This is an uncharacterized protein from Methanocaldococcus jannaschii (strain ATCC 43067 / DSM 2661 / JAL-1 / JCM 10045 / NBRC 100440) (Methanococcus jannaschii).